The primary structure comprises 296 residues: MSDKHINLVIVTGMSGAGKTVAIQSFEDLGYFTIDNMPPALVPKFLELIEQTNENRRVALVVDMRSRLFFKEINSTLDSIESNPSIDFRILFLDATDGELVSRYKETRRSHPLAADGRVLDGIRLERELLSPLKSMSQHVVDTTKLTPRQLRKTISDQFSEGSNQPSFRIEVMSFGFKYGLPLDADLVFDVRFLPNPYYQVELREKTGLDEDVFNYVMSHPESEVFYKHLLNLIVPILPAYQKEGKSVLTVAIGCTGGQHRSVAFAHCLAESLATDWSVNESHRDQNRRKETVNRS.

13-20 (GMSGAGKT) contributes to the ATP binding site. Residue 63–66 (DMRS) coordinates GTP.

The protein belongs to the RapZ-like family.

Functionally, displays ATPase and GTPase activities. The protein is Nucleotide-binding protein MGAS2096_Spy0550 of Streptococcus pyogenes serotype M12 (strain MGAS2096).